We begin with the raw amino-acid sequence, 159 residues long: Ribosomal RNA large subunit methyltransferase H (159 aa).

S-adenosyl-L-methionine-binding positions include Leu76, Gly108, and 127-132 (FSKMTF).

The protein belongs to the RNA methyltransferase RlmH family. In terms of assembly, homodimer.

It localises to the cytoplasm. The enzyme catalyses pseudouridine(1915) in 23S rRNA + S-adenosyl-L-methionine = N(3)-methylpseudouridine(1915) in 23S rRNA + S-adenosyl-L-homocysteine + H(+). Its function is as follows. Specifically methylates the pseudouridine at position 1915 (m3Psi1915) in 23S rRNA. This is Ribosomal RNA large subunit methyltransferase H from Bifidobacterium longum (strain DJO10A).